A 153-amino-acid polypeptide reads, in one-letter code: 6,7-dimethyl-8-ribityllumazine synthase (153 aa).

5-amino-6-(D-ribitylamino)uracil is bound by residues F23, 57-59 (AYE), and 81-83 (AVI). 86-87 (AT) is a binding site for (2S)-2-hydroxy-3-oxobutyl phosphate. H89 serves as the catalytic Proton donor. Position 113 (F113) interacts with 5-amino-6-(D-ribitylamino)uracil. (2S)-2-hydroxy-3-oxobutyl phosphate is bound at residue R127.

This sequence belongs to the DMRL synthase family.

The catalysed reaction is (2S)-2-hydroxy-3-oxobutyl phosphate + 5-amino-6-(D-ribitylamino)uracil = 6,7-dimethyl-8-(1-D-ribityl)lumazine + phosphate + 2 H2O + H(+). The protein operates within cofactor biosynthesis; riboflavin biosynthesis; riboflavin from 2-hydroxy-3-oxobutyl phosphate and 5-amino-6-(D-ribitylamino)uracil: step 1/2. In terms of biological role, catalyzes the formation of 6,7-dimethyl-8-ribityllumazine by condensation of 5-amino-6-(D-ribitylamino)uracil with 3,4-dihydroxy-2-butanone 4-phosphate. This is the penultimate step in the biosynthesis of riboflavin. This Leptospira borgpetersenii serovar Hardjo-bovis (strain JB197) protein is 6,7-dimethyl-8-ribityllumazine synthase.